The following is a 302-amino-acid chain: Ventral anterior homeobox 2a (302 aa).

Disordered stretches follow at residues 1-35 (MFDQ…RDKG), 50-73 (KDIP…SQST), 156-175 (RRTK…SSST), 199-223 (PPNL…LGTS), and 282-302 (AFEP…KSTS). The segment at residues 105–164 (PKRTRTSFTAEQLYRLELEFQRCQYVVGRERTELARQLNLSETQVKVWFQNRRTKQKKDQ) is a DNA-binding region (homeobox). The segment covering 161–172 (KKDQSRDSEKRS) has biased composition (basic and acidic residues). Residues 204–223 (SSSQNNMGTSSGNGTNLGTS) show a composition bias toward low complexity. The segment covering 287–296 (TRLDRKDTAS) has biased composition (basic and acidic residues).

The protein belongs to the EMX homeobox family.

It is found in the nucleus. Functionally, transcription factor that may function in dorsoventral specification of the forebrain. Regulates the expression of Wnt signaling antagonists including the expression of a truncated tcf7l2 isoform that cannot bind ctnnb1 and acts therefore as a potent dominant-negative Wnt antagonist. Plays a crucial role in eye development and, in particular, in the specification of the ventral optic vesicle. May be a regulator of axial polarization in the retina. This Xenopus laevis (African clawed frog) protein is Ventral anterior homeobox 2a (vax2-a).